The chain runs to 1083 residues: Probable arabinosyltransferase B (1083 aa).

The next 13 membrane-spanning stretches (helical) occupy residues 23–45 (VARWVAAIAGLIGFVSSVVTPLL), 222–239 (FAMMLAIITTVGALVALW), 252–274 (LIPARWSMFTLVDVAVIFGFLLW), 331–350 (SMWIRLPDLICGVACWLLLS), 357–379 (LGPAIVGFKPALWAAGLVLLAAW), 421–443 (TAAFTIGIQPTGLIAVAALLAGG), 456–478 (AVGAWPLVAPLLAAGTVVLTVVF), 525–542 (FGFLITALCLFTAVLITL), 555–572 (AWRLIGTILGTMFFLTFA), 576–598 (WVHHFGLFAALGAAVAALTTVLV), 611–633 (AFLAALLFVMTLCFATTNGWWYV), 648–670 (DGITFSTIFFILFAIVALYAYYL), and 690–712 (FWAPIPFAAGLMTLVFIGSMVAG).

Belongs to the emb family.

It localises to the cell membrane. In terms of biological role, arabinosyl transferase responsible for the polymerization of arabinose into the arabinan of arabinogalactan. The polypeptide is Probable arabinosyltransferase B (embB) (Mycobacterium leprae (strain TN)).